Consider the following 304-residue polypeptide: Voltage-dependent anion channel-forming protein YneE (304 aa).

4 helical membrane passes run 28-48, 50-70, 194-214, and 220-240; these read LLLN…YTHL, IKFT…FLGF, VLAG…TLIL, and LFCI…TPFI.

Belongs to the anion channel-forming bestrophin (TC 1.A.46) family.

Its subcellular location is the cell membrane. In Escherichia coli O157:H7, this protein is Voltage-dependent anion channel-forming protein YneE (yneE).